We begin with the raw amino-acid sequence, 135 residues long: 30 kDa antigenic glycoprotein (135 aa).

An N-terminal signal peptide occupies residues 1–5 (GNTYS). N-linked (GlcNAc...) asparagine glycans are attached at residues N22, N31, N57, and N73.

This sequence to H.contortus 15 kDa excretory/secretory protein.

It is found in the secreted. This Trichostrongylus colubriformis (Black scour worm) protein is 30 kDa antigenic glycoprotein.